The sequence spans 147 residues: MADSGPAGGAALAAPAPGPGSGSTGPRVYFQSPPGAAGEGPGGADDDGPVRRQGKVTVKYDRKELRKRLNLEEWILEQLTRLYDCQEEEIPELEIDVDELLDMESDDTRAARVKELLVDCYKPTEAFISGLLDKIRGMQKLSTPQKK.

A compositionally biased stretch (low complexity) spans 1–15; that stretch reads MADSGPAGGAALAAP. A disordered region spans residues 1 to 55; the sequence is MADSGPAGGAALAAPAPGPGSGSTGPRVYFQSPPGAAGEGPGGADDDGPVRRQGK. Alanine 2 bears the N-acetylalanine mark. Position 21 is a phosphoserine (serine 21). Position 29 is a phosphotyrosine (tyrosine 29). Phosphoserine is present on serine 32. At threonine 57 the chain carries Phosphothreonine. Positions 61–103 form a coiled coil; sequence DRKELRKRLNLEEWILEQLTRLYDCQEEEIPELEIDVDELLDM.

It belongs to the PP1 inhibitor family. Post-translationally, phosphorylated primarily on Thr-57 by PKC (in vitro). An unknown Ser is also phosphorylated by PKC (in vitro). In terms of tissue distribution, ubiquitous. Highly expressed in testis. Detected at low levels in the other tissues tested. Highly expressed in cardiac muscle, bladder and aorta (at protein level).

It is found in the cytoplasm. Its function is as follows. Inhibitor of PPP1CA. Has over 50-fold higher inhibitory activity when phosphorylated. The protein is Protein phosphatase 1 regulatory subunit 14B (Ppp1r14b) of Mus musculus (Mouse).